The chain runs to 768 residues: Dual specificity calcium/calmodulin-dependent 3',5'-cyclic nucleotide phosphodiesterase 1C (768 aa).

At Met1 the chain carries N-acetylmethionine. Positions 183-206 are calmodulin-binding; sequence EKPRFKSIVHAVQAGIFVERMYRR. The PDEase domain occupies 211-588; that stretch reads VGLSYPPAVI…ERWRAKVPKE (378 aa). The active-site Proton donor is His288. Residues His292, His328, Asp329, and Asp436 each coordinate Zn(2+). Position 329 (Asp329) interacts with Mg(2+). Disordered regions lie at residues 513–557 and 584–719; these read LIDE…INNS and KVPK…PPLR. Polar residues-rich tracts occupy residues 516-536 and 543-557; these read ETSQ…INSS and VKSS…INNS. Over residues 584 to 614 the composition is skewed to basic and acidic residues; the sequence is KVPKEEKAKKEAEEKARLAAEEKQKEMEAKS. The segment covering 631–641 has biased composition (polar residues); the sequence is ETKGQVNGTRT. 2 stretches are compositionally biased toward basic and acidic residues: residues 642 to 659 and 665 to 692; these read SKGD…KAGE and DLKD…DGTK. Residues 698–712 show a composition bias toward low complexity; that stretch reads SPAPSTSSTSRLTLP.

The protein belongs to the cyclic nucleotide phosphodiesterase family. PDE1 subfamily. In terms of assembly, homodimer. It depends on Zn(2+) as a cofactor. The cofactor is Mg(2+). Highly expressed in olfactory epithelium and at moderate levels, in cerebellum, as well as weakly in forebrain, testis, heart and lung. In the olfactory epithelium, expressed by sensory neurons, but not epithelial cells.

It localises to the lysosome. The catalysed reaction is a nucleoside 3',5'-cyclic phosphate + H2O = a nucleoside 5'-phosphate + H(+). It catalyses the reaction 3',5'-cyclic GMP + H2O = GMP + H(+). The enzyme catalyses 3',5'-cyclic AMP + H2O = AMP + H(+). Type I PDE are activated by the binding of calmodulin in the presence of Ca(2+). Its function is as follows. Calmodulin-dependent cyclic nucleotide phosphodiesterase with a dual specificity for the second messengers cAMP and cGMP, which are key regulators of many important physiological processes. Has a high affinity for both cAMP and cGMP. Modulates the amplitude and duration of the cAMP signal in sensory cilia in response to odorant stimulation, hence contributing to the generation of action potentials. Regulates smooth muscle cell proliferation. Regulates the stability of growth factor receptors, including PDGFRB. The sequence is that of Dual specificity calcium/calmodulin-dependent 3',5'-cyclic nucleotide phosphodiesterase 1C from Rattus norvegicus (Rat).